Reading from the N-terminus, the 494-residue chain is Aspartyl/glutamyl-tRNA(Asn/Gln) amidotransferase subunit B (494 aa).

This sequence belongs to the GatB/GatE family. GatB subfamily. Heterotrimer of A, B and C subunits.

It catalyses the reaction L-glutamyl-tRNA(Gln) + L-glutamine + ATP + H2O = L-glutaminyl-tRNA(Gln) + L-glutamate + ADP + phosphate + H(+). It carries out the reaction L-aspartyl-tRNA(Asn) + L-glutamine + ATP + H2O = L-asparaginyl-tRNA(Asn) + L-glutamate + ADP + phosphate + 2 H(+). Its function is as follows. Allows the formation of correctly charged Asn-tRNA(Asn) or Gln-tRNA(Gln) through the transamidation of misacylated Asp-tRNA(Asn) or Glu-tRNA(Gln) in organisms which lack either or both of asparaginyl-tRNA or glutaminyl-tRNA synthetases. The reaction takes place in the presence of glutamine and ATP through an activated phospho-Asp-tRNA(Asn) or phospho-Glu-tRNA(Gln). The sequence is that of Aspartyl/glutamyl-tRNA(Asn/Gln) amidotransferase subunit B from Nitrobacter winogradskyi (strain ATCC 25391 / DSM 10237 / CIP 104748 / NCIMB 11846 / Nb-255).